Consider the following 429-residue polypeptide: Glutamate-1-semialdehyde 2,1-aminomutase 2 (429 aa).

Lys-268 carries the post-translational modification N6-(pyridoxal phosphate)lysine.

The protein belongs to the class-III pyridoxal-phosphate-dependent aminotransferase family. HemL subfamily. In terms of assembly, homodimer. The cofactor is pyridoxal 5'-phosphate.

It is found in the cytoplasm. The catalysed reaction is (S)-4-amino-5-oxopentanoate = 5-aminolevulinate. It participates in porphyrin-containing compound metabolism; protoporphyrin-IX biosynthesis; 5-aminolevulinate from L-glutamyl-tRNA(Glu): step 2/2. The sequence is that of Glutamate-1-semialdehyde 2,1-aminomutase 2 from Staphylococcus epidermidis (strain ATCC 35984 / DSM 28319 / BCRC 17069 / CCUG 31568 / BM 3577 / RP62A).